A 408-amino-acid polypeptide reads, in one-letter code: ORC1-type DNA replication protein 15 (408 aa).

ATP is bound by residues 60–64 (VGKTA), Tyr208, and Arg220.

It belongs to the CDC6/cdc18 family.

Functionally, involved in regulation of DNA replication. This is ORC1-type DNA replication protein 15 (cdc6o) from Haloarcula marismortui (strain ATCC 43049 / DSM 3752 / JCM 8966 / VKM B-1809) (Halobacterium marismortui).